Reading from the N-terminus, the 164-residue chain is Putative pre-16S rRNA nuclease (164 aa).

This sequence belongs to the YqgF nuclease family.

It localises to the cytoplasm. Could be a nuclease involved in processing of the 5'-end of pre-16S rRNA. The sequence is that of Putative pre-16S rRNA nuclease from Synechococcus sp. (strain CC9902).